A 460-amino-acid chain; its full sequence is Argininosuccinate lyase (460 aa).

This sequence belongs to the lyase 1 family. Argininosuccinate lyase subfamily.

The protein resides in the cytoplasm. The enzyme catalyses 2-(N(omega)-L-arginino)succinate = fumarate + L-arginine. It participates in amino-acid biosynthesis; L-arginine biosynthesis; L-arginine from L-ornithine and carbamoyl phosphate: step 3/3. The protein is Argininosuccinate lyase of Streptococcus uberis (strain ATCC BAA-854 / 0140J).